Reading from the N-terminus, the 178-residue chain is ATP synthase subunit delta (178 aa).

It belongs to the ATPase delta chain family. In terms of assembly, F-type ATPases have 2 components, F(1) - the catalytic core - and F(0) - the membrane proton channel. F(1) has five subunits: alpha(3), beta(3), gamma(1), delta(1), epsilon(1). F(0) has three main subunits: a(1), b(2) and c(10-14). The alpha and beta chains form an alternating ring which encloses part of the gamma chain. F(1) is attached to F(0) by a central stalk formed by the gamma and epsilon chains, while a peripheral stalk is formed by the delta and b chains.

It is found in the cell inner membrane. Functionally, f(1)F(0) ATP synthase produces ATP from ADP in the presence of a proton or sodium gradient. F-type ATPases consist of two structural domains, F(1) containing the extramembraneous catalytic core and F(0) containing the membrane proton channel, linked together by a central stalk and a peripheral stalk. During catalysis, ATP synthesis in the catalytic domain of F(1) is coupled via a rotary mechanism of the central stalk subunits to proton translocation. This protein is part of the stalk that links CF(0) to CF(1). It either transmits conformational changes from CF(0) to CF(1) or is implicated in proton conduction. The sequence is that of ATP synthase subunit delta from Teredinibacter turnerae (strain ATCC 39867 / T7901).